A 539-amino-acid chain; its full sequence is Glucose-6-phosphate isomerase (539 aa).

The active-site Proton donor is the E349. Active-site residues include H380 and K508.

The protein belongs to the GPI family.

It localises to the cytoplasm. It catalyses the reaction alpha-D-glucose 6-phosphate = beta-D-fructose 6-phosphate. The protein operates within carbohydrate biosynthesis; gluconeogenesis. It functions in the pathway carbohydrate degradation; glycolysis; D-glyceraldehyde 3-phosphate and glycerone phosphate from D-glucose: step 2/4. Its function is as follows. Catalyzes the reversible isomerization of glucose-6-phosphate to fructose-6-phosphate. This Caulobacter sp. (strain K31) protein is Glucose-6-phosphate isomerase.